The chain runs to 81 residues: Photosystem I iron-sulfur center (81 aa).

2 4Fe-4S ferredoxin-type domains span residues 2-31 (SHSV…MIPW) and 39-68 (IAPA…VRVY). [4Fe-4S] cluster-binding residues include Cys-11, Cys-14, Cys-17, Cys-21, Cys-48, Cys-51, Cys-54, and Cys-58.

As to quaternary structure, the eukaryotic PSI reaction center is composed of at least 11 subunits. The cofactor is [4Fe-4S] cluster.

It is found in the plastid. It localises to the chloroplast thylakoid membrane. The enzyme catalyses reduced [plastocyanin] + hnu + oxidized [2Fe-2S]-[ferredoxin] = oxidized [plastocyanin] + reduced [2Fe-2S]-[ferredoxin]. Its function is as follows. Apoprotein for the two 4Fe-4S centers FA and FB of photosystem I (PSI); essential for photochemical activity. FB is the terminal electron acceptor of PSI, donating electrons to ferredoxin. The C-terminus interacts with PsaA/B/D and helps assemble the protein into the PSI complex. Required for binding of PsaD and PsaE to PSI. PSI is a plastocyanin-ferredoxin oxidoreductase, converting photonic excitation into a charge separation, which transfers an electron from the donor P700 chlorophyll pair to the spectroscopically characterized acceptors A0, A1, FX, FA and FB in turn. The chain is Photosystem I iron-sulfur center from Liriodendron tulipifera (Tuliptree).